The primary structure comprises 154 residues: MSEQANPFTQFFQLQRRSIEQSQRSMHQGIEFQKQVTRMMVDGMKAQQSVSRKGTDFARTAVKSYFEMMDSSVPGDNRMYADVKDAMDEQFDSIDEMTEQTWDVMEESFEENADAMDEIMEQSLEYLDDATEVYLEGLQEIEETSAQVTPDTPE.

The protein resides in the cytoplasmic granule. Functionally, polyhydroxyalkanoate (PHA) granule structural protein. Important for PHA granule formation and separation, and for cell growth. The chain is PHA granule-associated protein PhaP (phaP) from Haloferax mediterranei (strain ATCC 33500 / DSM 1411 / JCM 8866 / NBRC 14739 / NCIMB 2177 / R-4) (Halobacterium mediterranei).